Reading from the N-terminus, the 1047-residue chain is Rab11 family-interacting protein 3 (1047 aa).

Disordered stretches follow at residues 1 to 107, 311 to 335, and 475 to 496; these read MELC…WPQE, SHSC…DVSH, and PGPP…TAQE. A compositionally biased stretch (basic and acidic residues) spans 64 to 73; sequence EPHAPSRWAK. EF-hand domains lie at 496–531 and 528–563; these read EEGA…YGAE and YGAE…IRNG. Residues Asp-509, Asp-511, Asp-513, Asp-520, Asp-541, Ser-543, and Asp-552 each contribute to the Ca(2+) site. Phosphoserine occurs at positions 641, 765, and 829. A coiled-coil region spans residues 750–985; the sequence is EEDIADKVIF…NGQIITLSIQ (236 aa). The tract at residues 775 to 879 is ARF-binding domain (ABD); sequence GEQHGRLRQE…MLDEIEELTQ (105 aa). A disordered region spans residues 882–906; sequence SEEQENKRKMGDRLSHERHQFQRDK. Ser-938 and Ser-939 each carry phosphoserine. The FIP-RBD domain maps to 985–1047; sequence QGAKSLFSTS…ETNPSILEVK (63 aa).

As to quaternary structure, homodimer. Interacts with RAB11A; the interaction is direct and is required for the recruitment to endosomes. Interacts with RAB11B. Forms a ternary complex with RAB11A and dynein intermediate chain DYNC1LI1; RAB11FIP3 links RAB11A to dynein and the interaction regulates endocytic trafficking. Interacts with dynein intermediate chain and dynactin (DCTN1); the interaction activates dynein processivity. Interacts with ARF6 and EXOC7; the interaction serves for recruitment and tethering of recycling endosomes-derived vesicles to the cleavage furrow/midbody. Interacts with RACGAP1/MgcRacGAP; the interaction occurs at late telophase and is required for recruitment and tethering of recycling endosomes-derived vesicles to the cleavage furrow/midbody. Forms a complex with RAB11A and Rabin8/RAB3IP, probably a heterohexamer with two of each protein subunit, where RAB3IP and RAB11FIP3 simultaneously bind to RAB11A; the complex promotes preciliary trafficking. Forms a complex containing RAB11A, ASAP1, RAB3IP, RAP11FIP3 and ARF4; the complex promotes preciliary trafficking; the complex binds to RHO in photoreceptor cells and promotes RHO ciliary transport. Interacts with RAB11FIP4. Interacts with RAB25.

It localises to the recycling endosome membrane. Its subcellular location is the cytoplasm. It is found in the cytoskeleton. The protein localises to the microtubule organizing center. The protein resides in the centrosome. It localises to the cleavage furrow. Its subcellular location is the midbody. It is found in the golgi apparatus membrane. The protein localises to the golgi apparatus. The protein resides in the trans-Golgi network membrane. In terms of biological role, downstream effector molecule for Rab11 GTPase which is involved in endocytic trafficking, cytokinesis and intracellular ciliogenesis by participating in membrane delivery. Recruited by Rab11 to endosomes where it links Rab11 to dynein motor complex. The functional Rab11-RAB11FIP3-dynein complex regulates the movement of peripheral sorting endosomes (SE) along microtubule tracks toward the microtubule organizing center/centrosome, generating the endocytic recycling compartment (ERC) during interphase of cell cycle. Facilitates the interaction between dynein and dynactin and activates dynein processivity. Binding with ASAP1 is needed to regulate the pericentrosomal localization of recycling endosomes. The Rab11-RAB11FIP3 complex is also implicated in the transport during telophase of vesicles derived from recycling endosomes to the cleavage furrow via centrosome-anchored microtubules, where the vesicles function to deliver membrane during late cytokinesis and abscission. The recruitment of Rab11-RAB11FIP3-containing endosomes to the cleavage furrow and tethering to the midbody is co-mediated by RAB11FIP3 interaction with ARF6-exocyst and RACGAP1-MKLP1 tethering complexes. Also involved in the Rab11-Rabin8-Rab8 ciliogenesis cascade by facilitating the orderly assembly of a ciliary targeting complex containing Rab11, ASAP1, Rabin8/RAB3IP, RAB11FIP3 and ARF4, which directs preciliary vesicle trafficking to mother centriole and ciliogenesis initiation. Also promotes the activity of Rab11 and ASAP1 in the ARF4-dependent Golgi-to-cilia transport of the sensory receptor rhodopsin. Competes with WDR44 for binding to Rab11, which controls intracellular ciliogenesis pathway. May play a role in breast cancer cell motility by regulating actin cytoskeleton. In Mus musculus (Mouse), this protein is Rab11 family-interacting protein 3.